The chain runs to 1550 residues: Pentafunctional AROM polypeptide (1550 aa).

A 3-dehydroquinate synthase region spans residues 1-379 (MSIERVPILG…YQLKAHQVSK (379 aa)). NAD(+)-binding positions include 42–44 (DTN), 80–83 (ENNK), 111–113 (GGV), and D116. R127 provides a ligand contact to 7-phospho-2-dehydro-3-deoxy-D-arabino-heptonate. 136 to 137 (TT) is an NAD(+) binding site. Residues D143 and K149 each coordinate 7-phospho-2-dehydro-3-deoxy-D-arabino-heptonate. K158 is an NAD(+) binding site. A 7-phospho-2-dehydro-3-deoxy-D-arabino-heptonate-binding site is contributed by N159. NAD(+)-binding positions include 176-179 (FLET) and N187. Zn(2+) is bound at residue E191. Residues 191–194 (EVVK) and K243 each bind 7-phospho-2-dehydro-3-deoxy-D-arabino-heptonate. E253 acts as the Proton acceptor; for 3-dehydroquinate synthase activity in catalysis. Residues 257–261 (RNLLN) and H264 contribute to the 7-phospho-2-dehydro-3-deoxy-D-arabino-heptonate site. H264 serves as a coordination point for Zn(2+). H268 acts as the Proton acceptor; for 3-dehydroquinate synthase activity in catalysis. The 7-phospho-2-dehydro-3-deoxy-D-arabino-heptonate site is built by H280 and K351. H280 contacts Zn(2+). Residues 392–837 (VHPFTNPPKE…WDILHSKFKI (446 aa)) are EPSP synthase. Positions 857 to 1047 (DKGVIVIGMR…VPTGRSTAVV (191 aa)) are shikimate kinase. ATP is bound at residue 864–871 (GMRGTGKS). The tract at residues 1048–1257 (LTLPDLNNVA…NDDGLLTIGE (210 aa)) is 3-dehydroquinase. R1193 acts as the Schiff-base intermediate with substrate; for 3-dehydroquinate dehydratase activity in catalysis. A shikimate dehydrogenase region spans residues 1270-1550 (AKKFWVIGSP…EIIHRAVVEE (281 aa)).

It in the N-terminal section; belongs to the sugar phosphate cyclases superfamily. Dehydroquinate synthase family. The protein in the 2nd section; belongs to the EPSP synthase family. This sequence in the 3rd section; belongs to the shikimate kinase family. In the 4th section; belongs to the type-I 3-dehydroquinase family. It in the C-terminal section; belongs to the shikimate dehydrogenase family. As to quaternary structure, homodimer. Zn(2+) is required as a cofactor.

It is found in the cytoplasm. The catalysed reaction is 7-phospho-2-dehydro-3-deoxy-D-arabino-heptonate = 3-dehydroquinate + phosphate. It carries out the reaction 3-dehydroquinate = 3-dehydroshikimate + H2O. The enzyme catalyses shikimate + NADP(+) = 3-dehydroshikimate + NADPH + H(+). It catalyses the reaction shikimate + ATP = 3-phosphoshikimate + ADP + H(+). The catalysed reaction is 3-phosphoshikimate + phosphoenolpyruvate = 5-O-(1-carboxyvinyl)-3-phosphoshikimate + phosphate. It functions in the pathway metabolic intermediate biosynthesis; chorismate biosynthesis; chorismate from D-erythrose 4-phosphate and phosphoenolpyruvate: step 2/7. Its pathway is metabolic intermediate biosynthesis; chorismate biosynthesis; chorismate from D-erythrose 4-phosphate and phosphoenolpyruvate: step 3/7. It participates in metabolic intermediate biosynthesis; chorismate biosynthesis; chorismate from D-erythrose 4-phosphate and phosphoenolpyruvate: step 4/7. The protein operates within metabolic intermediate biosynthesis; chorismate biosynthesis; chorismate from D-erythrose 4-phosphate and phosphoenolpyruvate: step 5/7. It functions in the pathway metabolic intermediate biosynthesis; chorismate biosynthesis; chorismate from D-erythrose 4-phosphate and phosphoenolpyruvate: step 6/7. The AROM polypeptide catalyzes 5 consecutive enzymatic reactions in prechorismate polyaromatic amino acid biosynthesis. This chain is Pentafunctional AROM polypeptide, found in Candida dubliniensis (strain CD36 / ATCC MYA-646 / CBS 7987 / NCPF 3949 / NRRL Y-17841) (Yeast).